We begin with the raw amino-acid sequence, 468 residues long: TFIIA-alpha and beta-like factor (468 aa).

Disordered regions lie at residues 215-236 (DRRL…LSLP) and 379-416 (DSVS…SEQD). The segment covering 380–391 (SVSNEDSTANSS) has biased composition (polar residues). Over residues 401–416 (PEEDPLNSGDDVSEQD) the composition is skewed to acidic residues.

This sequence belongs to the TFIIA subunit 1 family. Testis specific. Expressed in pachytene spermatocytes and haploid spermatids.

It localises to the nucleus. Functionally, may function as a testis specific transcription factor. Binds DNA in conjunction with GTF2A2 and TBP (the TATA-binding protein) and together with GTF2A2, allows mRNA transcription. This Mus musculus (Mouse) protein is TFIIA-alpha and beta-like factor (Gtf2a1l).